The chain runs to 706 residues: Amino-acid acetyltransferase, mitochondrial (706 aa).

Disordered regions lie at residues 1-25 (MSSR…GAGD) and 367-403 (NPAN…PAKQ). The N-terminal 35 residues, 1-35 (MSSRVLASRAAQPLKRHPTVVGAGDEAYPTPRRCF), are a transit peptide targeting the mitochondrion. Polar residues predominate over residues 367–388 (NPANNSQGESVVTNPISDSNAV). Low complexity predominate over residues 389–401 (SESASTEPTSTPA). Residues 527–696 (TRPNMNLDDP…YEAVCRSIQP (170 aa)) form the N-acetyltransferase domain.

It belongs to the acetyltransferase family.

The protein resides in the mitochondrion. It carries out the reaction L-glutamate + acetyl-CoA = N-acetyl-L-glutamate + CoA + H(+). It functions in the pathway amino-acid biosynthesis; L-arginine biosynthesis; N(2)-acetyl-L-ornithine from L-glutamate: step 1/4. In terms of biological role, N-acetylglutamate synthase involved in arginine biosynthesis. This chain is Amino-acid acetyltransferase, mitochondrial (arg2), found in Emericella nidulans (strain FGSC A4 / ATCC 38163 / CBS 112.46 / NRRL 194 / M139) (Aspergillus nidulans).